The sequence spans 311 residues: Aspartate carbamoyltransferase catalytic subunit (311 aa).

Carbamoyl phosphate-binding residues include Arg55 and Thr56. Position 83 (Lys83) interacts with L-aspartate. Residues Arg105, His133, and Gln136 each coordinate carbamoyl phosphate. L-aspartate is bound by residues Arg166 and Arg220. Carbamoyl phosphate contacts are provided by Gly261 and Pro262.

Belongs to the aspartate/ornithine carbamoyltransferase superfamily. ATCase family. As to quaternary structure, heterododecamer (2C3:3R2) of six catalytic PyrB chains organized as two trimers (C3), and six regulatory PyrI chains organized as three dimers (R2).

The catalysed reaction is carbamoyl phosphate + L-aspartate = N-carbamoyl-L-aspartate + phosphate + H(+). The protein operates within pyrimidine metabolism; UMP biosynthesis via de novo pathway; (S)-dihydroorotate from bicarbonate: step 2/3. In terms of biological role, catalyzes the condensation of carbamoyl phosphate and aspartate to form carbamoyl aspartate and inorganic phosphate, the committed step in the de novo pyrimidine nucleotide biosynthesis pathway. This is Aspartate carbamoyltransferase catalytic subunit from Chlorobium chlorochromatii (strain CaD3).